A 142-amino-acid polypeptide reads, in one-letter code: 3-hydroxyacyl-[acyl-carrier-protein] dehydratase FabZ (142 aa).

Residue H49 is part of the active site.

It belongs to the thioester dehydratase family. FabZ subfamily.

Its subcellular location is the cytoplasm. It catalyses the reaction a (3R)-hydroxyacyl-[ACP] = a (2E)-enoyl-[ACP] + H2O. In terms of biological role, involved in unsaturated fatty acids biosynthesis. Catalyzes the dehydration of short chain beta-hydroxyacyl-ACPs and long chain saturated and unsaturated beta-hydroxyacyl-ACPs. This chain is 3-hydroxyacyl-[acyl-carrier-protein] dehydratase FabZ, found in Clostridium novyi (strain NT).